A 366-amino-acid polypeptide reads, in one-letter code: Aminomethyltransferase (366 aa).

It belongs to the GcvT family. As to quaternary structure, the glycine cleavage system is composed of four proteins: P, T, L and H.

It carries out the reaction N(6)-[(R)-S(8)-aminomethyldihydrolipoyl]-L-lysyl-[protein] + (6S)-5,6,7,8-tetrahydrofolate = N(6)-[(R)-dihydrolipoyl]-L-lysyl-[protein] + (6R)-5,10-methylene-5,6,7,8-tetrahydrofolate + NH4(+). Functionally, the glycine cleavage system catalyzes the degradation of glycine. The sequence is that of Aminomethyltransferase from Sodalis glossinidius (strain morsitans).